The following is a 526-amino-acid chain: Inosine-5'-monophosphate dehydrogenase (526 aa).

CBS domains follow at residues 120–179 (FIQD…EDPV) and 183–239 (MATD…PLAS). NAD(+) is bound by residues 276–278 (DSS) and 326–328 (GMG). 2 residues coordinate K(+): glycine 328 and glycine 330. Serine 331 serves as a coordination point for IMP. Cysteine 333 is a K(+) binding site. Cysteine 333 (thioimidate intermediate) is an active-site residue. Residues 366–368 (DGG) and 389–390 (GS) contribute to the IMP site. Catalysis depends on arginine 439, which acts as the Proton acceptor. Glutamine 451 lines the IMP pocket. Serine 506 lines the K(+) pocket. Residues 506-526 (SAQTEGNVHGLHTHEKKLYSS) are disordered. The segment covering 517–526 (HTHEKKLYSS) has biased composition (basic and acidic residues).

Belongs to the IMPDH/GMPR family. In terms of assembly, homotetramer. It depends on K(+) as a cofactor.

The protein localises to the cytoplasm. It catalyses the reaction IMP + NAD(+) + H2O = XMP + NADH + H(+). It participates in secondary metabolite biosynthesis; terpenoid biosynthesis. Its activity is regulated as follows. Mycophenolic acid (MPA) is a non-competitive inhibitor that prevents formation of the closed enzyme conformation by binding to the same site as the amobile flap. In contrast, mizoribine monophosphate (MZP) is a competitive inhibitor that induces the closed conformation. MPA is a potent inhibitor of mammalian IMPDHs but a poor inhibitor of the bacterial enzymes. MZP is a more potent inhibitor of bacterial IMPDH. Its function is as follows. Catalyzes the conversion of inosine 5'-phosphate (IMP) to xanthosine 5'-phosphate (XMP), the first committed and rate-limiting step in the de novo synthesis of guanine nucleotides, and therefore plays an important role in the regulation of cell growth. Part of the gene cluster that mediates the biosynthesis of mycophenolic acid (MPA), the first isolated antibiotic natural product in the world. Does not play a role in the biosynthesis of MPA, but is involved in self resistance to MPA, since MPA acts as an inhibitor of IMP dehydrogenases. The chain is Inosine-5'-monophosphate dehydrogenase from Penicillium roqueforti (strain FM164).